Reading from the N-terminus, the 357-residue chain is Phosphoribosylformylglycinamidine cyclo-ligase (357 aa).

The protein belongs to the AIR synthase family.

Its subcellular location is the cytoplasm. The catalysed reaction is 2-formamido-N(1)-(5-O-phospho-beta-D-ribosyl)acetamidine + ATP = 5-amino-1-(5-phospho-beta-D-ribosyl)imidazole + ADP + phosphate + H(+). The protein operates within purine metabolism; IMP biosynthesis via de novo pathway; 5-amino-1-(5-phospho-D-ribosyl)imidazole from N(2)-formyl-N(1)-(5-phospho-D-ribosyl)glycinamide: step 2/2. This Rhizobium etli (strain CIAT 652) protein is Phosphoribosylformylglycinamidine cyclo-ligase.